We begin with the raw amino-acid sequence, 859 residues long: MQEQYQPSEIEAKVQQHWQDTKTFEVTEDENKEKFYCLSMFPYPSGRLHMGHVRNYTIGDVVARYQRLQGKNVLQPIGWDSFGLPAENAAIKNSSAPAPWTYENIDYMKNQLKMLGFGYDWSREIATCTPEYYRWEQWFFTKLYEKGLVYKKTASVNWCPNDETVLANEQVQDGCCWRCDTEVVQKEIPQWFIKITDYADELLSDIDQLDEWPEQVKTMQRNWIGRSEGIEMTFQVADSDESFDIYTTRPDTVMGVTYVAIAAGHPLAEKAAANSPELAAFIEECKNADTTEAAMAAMEKKGVATGLYAIHPLTGKQVPIWAANFVLMNYGTGAVMSVPAHDQRDYEFAIKYGLAIEGVIKPEDAELDISEEAYTEKGVLFNSAEFDGLDFQAAFDAIDAKLTAEGKGKRQVNFRLRDWGVSRQRYWGAPIPMVTLADGTVVPTPEDQLPVILPEDVVMDGIQSPIKADKEWAKTQINGEDALRETDTFDTFMESSWYYARYCSPHADEMLDPAKANYWLPVDQYIGGIEHACMHLLYFRFFHKLLRDIGLVNSDEPAKRLLTQGMVLADAYYYTNEKGARVWVSPADVTVQETDDKGRTVKAVDSHGNELVYTGMSKMSKSKNNGIDPQEMVDKYGADTVRLFMMFAAPPELTLEWQESSVEGAHRFIKRLWKVAHDHVAKGTTVSLDVKSLDAKQKELRRELHKTIAKVGDDIERRQMFNTAIASVMELMNRLQKAPTETEQDRALMQEALSAVVRLLYPIIPHTSFSLWKELGNEENIEDVRWPEADESALVEDSKLIIVQVNGKLRAKITVPADATKEAVEAQGFAEEGVIKHTEGKTVRKVIYVPGKLLNIVAN.

The 'HIGH' region motif lies at 42–52 (PYPSGRLHMGH). Residues 618–622 (KMSKS) carry the 'KMSKS' region motif. An ATP-binding site is contributed by K621.

Belongs to the class-I aminoacyl-tRNA synthetase family.

It is found in the cytoplasm. It catalyses the reaction tRNA(Leu) + L-leucine + ATP = L-leucyl-tRNA(Leu) + AMP + diphosphate. The sequence is that of Leucine--tRNA ligase from Shewanella woodyi (strain ATCC 51908 / MS32).